Reading from the N-terminus, the 503-residue chain is Guanosine-5'-triphosphate,3'-diphosphate pyrophosphatase (503 aa).

This sequence belongs to the GppA/Ppx family. GppA subfamily.

It carries out the reaction guanosine 3'-diphosphate 5'-triphosphate + H2O = guanosine 3',5'-bis(diphosphate) + phosphate + H(+). It participates in purine metabolism; ppGpp biosynthesis; ppGpp from GTP: step 2/2. Its function is as follows. Catalyzes the conversion of pppGpp to ppGpp. Guanosine pentaphosphate (pppGpp) is a cytoplasmic signaling molecule which together with ppGpp controls the 'stringent response', an adaptive process that allows bacteria to respond to amino acid starvation, resulting in the coordinated regulation of numerous cellular activities. The sequence is that of Guanosine-5'-triphosphate,3'-diphosphate pyrophosphatase from Pseudoalteromonas atlantica (strain T6c / ATCC BAA-1087).